The sequence spans 332 residues: MSRILDNEIMGDEELVERTLRPQYLREYIGQDKVKDQLQIFIEAAKMRDEALDHVLLFGPPGLGKTTMAFVIANELGVNLKQTSGPVIEKAGDLVAILNELEPGDVLFIDEIHRLPMSVEEVLYSAMEDFYIDIMIGAGEGSRSVHLELPPFTLIGATTRAGMLSNPLRARFGITGHMEYYAHADLTEIVERTADIFEMEITHEAASELALRSRGTPRIANRLLKRVRDFAQIVGNGVIDDVITDKALTMLDVDHEGLDYVDQKILRTMIEMYGGGPVGLGTLSVNIAEERETVEDMYEPYLIQKGFIMRTRSGRMATAKAYEHLGYEYNEK.

The tract at residues 1-181 (MSRILDNEIM…FGITGHMEYY (181 aa)) is large ATPase domain (RuvB-L). ATP contacts are provided by residues Leu-20, Arg-21, Gly-62, Lys-65, Thr-66, Thr-67, 128–130 (EDF), Arg-171, Tyr-181, and Arg-218. Position 66 (Thr-66) interacts with Mg(2+). Residues 182 to 252 (AHADLTEIVE…ITDKALTMLD (71 aa)) are small ATPAse domain (RuvB-S). The interval 255–332 (HEGLDYVDQK…EHLGYEYNEK (78 aa)) is head domain (RuvB-H). Residues Arg-291, Arg-310, Arg-312, and Arg-315 each contribute to the DNA site.

It belongs to the RuvB family. Homohexamer. Forms an RuvA(8)-RuvB(12)-Holliday junction (HJ) complex. HJ DNA is sandwiched between 2 RuvA tetramers; dsDNA enters through RuvA and exits via RuvB. An RuvB hexamer assembles on each DNA strand where it exits the tetramer. Each RuvB hexamer is contacted by two RuvA subunits (via domain III) on 2 adjacent RuvB subunits; this complex drives branch migration. In the full resolvosome a probable DNA-RuvA(4)-RuvB(12)-RuvC(2) complex forms which resolves the HJ.

It localises to the cytoplasm. It carries out the reaction ATP + H2O = ADP + phosphate + H(+). The RuvA-RuvB-RuvC complex processes Holliday junction (HJ) DNA during genetic recombination and DNA repair, while the RuvA-RuvB complex plays an important role in the rescue of blocked DNA replication forks via replication fork reversal (RFR). RuvA specifically binds to HJ cruciform DNA, conferring on it an open structure. The RuvB hexamer acts as an ATP-dependent pump, pulling dsDNA into and through the RuvAB complex. RuvB forms 2 homohexamers on either side of HJ DNA bound by 1 or 2 RuvA tetramers; 4 subunits per hexamer contact DNA at a time. Coordinated motions by a converter formed by DNA-disengaged RuvB subunits stimulates ATP hydrolysis and nucleotide exchange. Immobilization of the converter enables RuvB to convert the ATP-contained energy into a lever motion, pulling 2 nucleotides of DNA out of the RuvA tetramer per ATP hydrolyzed, thus driving DNA branch migration. The RuvB motors rotate together with the DNA substrate, which together with the progressing nucleotide cycle form the mechanistic basis for DNA recombination by continuous HJ branch migration. Branch migration allows RuvC to scan DNA until it finds its consensus sequence, where it cleaves and resolves cruciform DNA. The sequence is that of Holliday junction branch migration complex subunit RuvB from Streptococcus pneumoniae (strain CGSP14).